Consider the following 548-residue polypeptide: Natural resistance-associated macrophage protein 1 (548 aa).

A compositionally biased stretch (polar residues) spans 1–11 (MSGDTGPSKQG). The segment at 1–38 (MSGDTGPSKQGGTRYGSISSPPSPGPQQAPPGGTYLGE) is disordered. At 1–55 (MSGDTGPSKQGGTRYGSISSPPSPGPQQAPPGGTYLGEKIPIPDTESGAFSLRKL) the chain is on the cytoplasmic side. Residues 56-73 (WAFTGPGFLMSIAFLDPG) form a helical membrane-spanning segment. Residues 74 to 82 (NIESDLQAG) lie on the Extracellular side of the membrane. A helical membrane pass occupies residues 83 to 102 (AVAGFKLLWVLLWATVLGLL). The Cytoplasmic portion of the chain corresponds to 103–139 (CQRLAARLGVVTGKDLGEVCHLYYPKVPRILLWLTIE). Residues 140–160 (LAIVGSDMQEVIGTAIAFSLL) form a helical membrane-spanning segment. At 161–164 (SAGR) the chain is on the extracellular side. A helical membrane pass occupies residues 165-184 (IPLWGGVLITVVDTFFFLFL). The Cytoplasmic portion of the chain corresponds to 185 to 193 (DNYGLRKLE). The chain crosses the membrane as a helical span at residues 194 to 214 (AFFGFLITIMALTFGYEYVVA). Over 215–237 (QPAQGALLQGLFLPSCRGCGQPE) the chain is Extracellular. Residues 238–256 (LLQAVGIIGAIIMPHNIYL) traverse the membrane as a helical segment. At 257 to 284 (HSSLVKSREVDRSRRADIREANMYFLIE) the chain is on the cytoplasmic side. A helical transmembrane segment spans residues 285–304 (ATIALSVSFLINLFVMAVFG). At 305-346 (QAFYKQTNQAAFNICAKSSLHDYAPIFPRNNLTVAVDIYQGG) the chain is on the extracellular side. N-linked (GlcNAc...) asparagine glycosylation occurs at N335. Residues 347-366 (VILGCLFGPAALYIWAVGLL) form a helical membrane-spanning segment. The Cytoplasmic segment spans residues 367–397 (AAGQSSTMTGTYAGQFVMEGFLKLRWSRFAR). Residues 398–415 (VLLTRSCAILPTVLLAVF) traverse the membrane as a helical segment. Topologically, residues 416–426 (RDLRDLSGLND) are extracellular. Residues 427–447 (LLNVLQSLLLPFAVLPILTFT) form a helical membrane-spanning segment. At 448-463 (SMPALMQEFANGLVSK) the chain is on the cytoplasmic side. The helical transmembrane segment at 464–485 (VITSSIMVLVCAVNLYFVISYV) threads the bilayer. Residues 486–493 (PSLPHPAY) are Extracellular-facing. A helical membrane pass occupies residues 494 to 513 (FSLVALLAAAYLGLTTYLVW). Topologically, residues 514 to 548 (TCLITQGATFLAHNSHQRFLYGLPEEDQEKGRTSG) are cytoplasmic.

The protein belongs to the NRAMP family.

The protein localises to the late endosome membrane. It is found in the lysosome membrane. The catalysed reaction is Zn(2+)(in) + H(+)(out) = Zn(2+)(out) + H(+)(in). The enzyme catalyses Fe(2+)(in) + H(+)(out) = Fe(2+)(out) + H(+)(in). It carries out the reaction Mn(2+)(in) + H(+)(out) = Mn(2+)(out) + H(+)(in). In terms of biological role, macrophage-specific antiporter that fluxes metal ions in either direction against a proton gradient. Localized to late endosomal lysosomal membranes, delivers bivalent cations from the cytosol into these acidic compartments where they may directly affect antimicrobial activity. Involved in iron metabolism and host natural resistance to infection with intracellular parasites. Pathogen resistance involves sequestration of Fe(2+) and Mn(2+), cofactors of both prokaryotic and eukaryotic catalases and superoxide dismutases, not only to protect the macrophage against its own generation of reactive oxygen species, but to deny the cations to the pathogen for synthesis of its protective enzymes. The polypeptide is Natural resistance-associated macrophage protein 1 (SLC11A1) (Bubalus bubalis (Domestic water buffalo)).